Here is a 445-residue protein sequence, read N- to C-terminus: Protein PRRC1 (445 aa).

Disordered regions lie at residues 1-71 (MMEE…PSAP) and 105-167 (PPVS…TGLL). Positions 27–49 (MSSTPVPLAATSSFSSPNVSSME) are enriched in polar residues. Residues 59–71 (PQPPLPPVRPSAP) show a composition bias toward pro residues. Phosphoserine occurs at positions 209 and 408.

It belongs to the PRRC1 family. As to quaternary structure, interacts with PRKAR1A; resulting in PKA activation. Ubiquitously expressed with higher expression in kidney, liver and placenta. Detected in embryonic kidney cells (HEK293 cells) (at protein level). As to expression, specifically expressed in liver.

It is found in the golgi apparatus. Its subcellular location is the cytoplasm. In terms of biological role, may act as a regulator of the protein kinase A (PKA) activity during embryonic development. This chain is Protein PRRC1 (PRRC1), found in Homo sapiens (Human).